We begin with the raw amino-acid sequence, 518 residues long: Cytochrome P450 709B3 (518 aa).

Residues 3-23 form a helical membrane-spanning segment; that stretch reads LISTINLLTIVLLLFVVSKIW. Residue cysteine 465 participates in heme binding.

It belongs to the cytochrome P450 family. Heme is required as a cofactor. In terms of tissue distribution, highly expressed in rosette leaves and siliques, and at lower levels in flowers.

The protein resides in the membrane. Plays a role in abscisic acid (ABA) and salt stress response. May regulate the salt stress response independently of well-characterized pathways. Does not function as cytokinin hydroxylase in yeast heterologous system. This is Cytochrome P450 709B3 from Arabidopsis thaliana (Mouse-ear cress).